The following is a 229-amino-acid chain: Small ribosomal subunit protein uS3 (229 aa).

Residues 39–107 (VRQFLIKELK…PAQINISEVR (69 aa)) enclose the KH type-2 domain.

Belongs to the universal ribosomal protein uS3 family. Part of the 30S ribosomal subunit. Forms a tight complex with proteins S10 and S14.

Functionally, binds the lower part of the 30S subunit head. Binds mRNA in the 70S ribosome, positioning it for translation. This chain is Small ribosomal subunit protein uS3, found in Photobacterium profundum (strain SS9).